The chain runs to 842 residues: Protein P (842 aa).

The tract at residues 1–177 is terminal protein domain (TP); it reads MPLSYQHFRR…FCGSPYSWEQ (177 aa). The interval 178-345 is spacer; that stretch reads ELHHGAFLDG…YCLTHLVNLL (168 aa). The disordered stretch occupies residues 186-273; sequence DGPSRMGEES…AKNIASRSAS (88 aa). Polar residues predominate over residues 223 to 239; it reads GPQSQQRPLDGSQQGRS. The polymerase/reverse transcriptase domain (RT) stretch occupies residues 346–689; it reads EDWGPCTEHG…YLNLYPVARQ (344 aa). Residues 356-599 enclose the Reverse transcriptase domain; sequence RHHIRIPRTP…YSLNFMGYVI (244 aa). Mg(2+)-binding residues include aspartate 428, aspartate 550, and aspartate 551.

It belongs to the hepadnaviridae P protein family.

It catalyses the reaction DNA(n) + a 2'-deoxyribonucleoside 5'-triphosphate = DNA(n+1) + diphosphate. It carries out the reaction Endonucleolytic cleavage to 5'-phosphomonoester.. Activated by host HSP70 and HSP40 in vitro to be able to bind the epsilon loop of the pgRNA. Because deletion of the RNase H region renders the protein partly chaperone-independent, the chaperones may be needed indirectly to relieve occlusion of the RNA-binding site by this domain. Inhibited by several reverse-transcriptase inhibitors: Lamivudine, Adefovir and Entecavir. Functionally, multifunctional enzyme that converts the viral RNA genome into dsDNA in viral cytoplasmic capsids. This enzyme displays a DNA polymerase activity that can copy either DNA or RNA templates, and a ribonuclease H (RNase H) activity that cleaves the RNA strand of RNA-DNA heteroduplexes in a partially processive 3'- to 5'-endonucleasic mode. Neo-synthesized pregenomic RNA (pgRNA) are encapsidated together with the P protein, and reverse-transcribed inside the nucleocapsid. Initiation of reverse-transcription occurs first by binding the epsilon loop on the pgRNA genome, and is initiated by protein priming, thereby the 5'-end of (-)DNA is covalently linked to P protein. Partial (+)DNA is synthesized from the (-)DNA template and generates the relaxed circular DNA (RC-DNA) genome. After budding and infection, the RC-DNA migrates in the nucleus, and is converted into a plasmid-like covalently closed circular DNA (cccDNA). The activity of P protein does not seem to be necessary for cccDNA generation, and is presumably released from (+)DNA by host nuclear DNA repair machinery. The sequence is that of Protein P from Homo sapiens (Human).